A 242-amino-acid polypeptide reads, in one-letter code: Pyridoxine 5'-phosphate synthase (242 aa).

Residue Asn-6 participates in 3-amino-2-oxopropyl phosphate binding. 8-9 (DH) serves as a coordination point for 1-deoxy-D-xylulose 5-phosphate. Arg-17 provides a ligand contact to 3-amino-2-oxopropyl phosphate. The active-site Proton acceptor is His-42. 1-deoxy-D-xylulose 5-phosphate-binding residues include Arg-44 and His-49. The Proton acceptor role is filled by Glu-69. Residue Thr-99 participates in 1-deoxy-D-xylulose 5-phosphate binding. The active-site Proton donor is His-190. Residues Gly-191 and 212-213 (GH) contribute to the 3-amino-2-oxopropyl phosphate site.

Belongs to the PNP synthase family. As to quaternary structure, homooctamer; tetramer of dimers.

It localises to the cytoplasm. The enzyme catalyses 3-amino-2-oxopropyl phosphate + 1-deoxy-D-xylulose 5-phosphate = pyridoxine 5'-phosphate + phosphate + 2 H2O + H(+). Its pathway is cofactor biosynthesis; pyridoxine 5'-phosphate biosynthesis; pyridoxine 5'-phosphate from D-erythrose 4-phosphate: step 5/5. In terms of biological role, catalyzes the complicated ring closure reaction between the two acyclic compounds 1-deoxy-D-xylulose-5-phosphate (DXP) and 3-amino-2-oxopropyl phosphate (1-amino-acetone-3-phosphate or AAP) to form pyridoxine 5'-phosphate (PNP) and inorganic phosphate. This chain is Pyridoxine 5'-phosphate synthase, found in Neisseria meningitidis serogroup B (strain ATCC BAA-335 / MC58).